A 258-amino-acid polypeptide reads, in one-letter code: Aquaporin PIP1-2 (258 aa).

The tract at residues 1 to 37 (MEGKEEDVRLGANKFTERQPIGTAAQSQDKDYKEPPP) is disordered. The Cytoplasmic segment spans residues 1 to 55 (MEGKEEDVRLGANKFTERQPIGTAAQSQDKDYKEPPPAPLFEPGELSSWSFYRAG). Residues 56-76 (IAEFVATFLFLYITILTVMGV) traverse the membrane as a helical segment. Over 77–89 (VKSSTKCSTVGIQ) the chain is Extracellular. Residues 90–110 (GIAWAFGGMIFALVYCTAGIS) form a helical membrane-spanning segment. Residues 111–133 (GGHINPAVTFGLFLARKLSLTRA) are Cytoplasmic-facing. Residues 115 to 117 (NPA) carry the NPA 1 motif. Residues 134–154 (LFYMVMQCLGAICGAGVVKGF) traverse the membrane as a helical segment. The Extracellular portion of the chain corresponds to 155–175 (QKGLYENNGGGANVVAPGYTK). A helical membrane pass occupies residues 176–196 (GDGLGAEIVGTFILVYTVFSA). The Cytoplasmic segment spans residues 197 to 209 (TDAKRSARDSHVP). The chain crosses the membrane as a helical span at residues 210 to 230 (ILAPLPIGFAVFLVHLATIPI). The Extracellular portion of the chain corresponds to 231–258 (TGTGINPARSLGAAIIYNKGHAWDDHWI). The NPA 2 signature appears at 236–238 (NPA).

The protein belongs to the MIP/aquaporin (TC 1.A.8) family. PIP (TC 1.A.8.11) subfamily. As to expression, barely detectable in roots, leaves and fruits.

The protein resides in the cell membrane. Functionally, water channel required to facilitate the transport of water across cell membrane; mercury-insensitive. Contributes to the tolerance to multiple abiotic stresses including salt (NaCl), cold and water deprivation, by modulating cytosolic K(+)/Na(+) ratio, maintaining osmotic balance, and reducing membrane injury (e.g. oxidative injury). The chain is Aquaporin PIP1-2 from Musa acuminata (Banana).